Here is a 780-residue protein sequence, read N- to C-terminus: Phosphoenolpyruvate synthase (780 aa).

Residue histidine 409 is the Tele-phosphohistidine intermediate of the active site. Arginine 499, arginine 566, glutamate 668, glycine 689, serine 690, asparagine 691, and aspartate 692 together coordinate substrate. Residue glutamate 668 participates in Mg(2+) binding. Residue aspartate 692 participates in Mg(2+) binding.

It belongs to the PEP-utilizing enzyme family. Mg(2+) serves as cofactor.

The enzyme catalyses pyruvate + ATP + H2O = phosphoenolpyruvate + AMP + phosphate + 2 H(+). The protein operates within carbohydrate biosynthesis; gluconeogenesis. Catalyzes the phosphorylation of pyruvate to phosphoenolpyruvate. The chain is Phosphoenolpyruvate synthase (ppsA) from Deinococcus radiodurans (strain ATCC 13939 / DSM 20539 / JCM 16871 / CCUG 27074 / LMG 4051 / NBRC 15346 / NCIMB 9279 / VKM B-1422 / R1).